We begin with the raw amino-acid sequence, 176 residues long: Ribosome maturation factor RimM (176 aa).

Residues 92–165 (EDEFLYSDLI…RLVVVPPVYA (74 aa)) enclose the PRC barrel domain.

It belongs to the RimM family. Binds ribosomal protein uS19.

The protein resides in the cytoplasm. An accessory protein needed during the final step in the assembly of 30S ribosomal subunit, possibly for assembly of the head region. Essential for efficient processing of 16S rRNA. May be needed both before and after RbfA during the maturation of 16S rRNA. It has affinity for free ribosomal 30S subunits but not for 70S ribosomes. The protein is Ribosome maturation factor RimM of Paramagnetospirillum magneticum (strain ATCC 700264 / AMB-1) (Magnetospirillum magneticum).